Reading from the N-terminus, the 217-residue chain is Polyadenylate-binding protein 3 (217 aa).

A disordered region spans residues 1-28; that stretch reads MEEEEHEVYGGEIPEVGDTDVPDPDIDM. Acidic residues predominate over residues 15–28; sequence EVGDTDVPDPDIDM. The stretch at 30-71 forms a coiled coil; sequence AADEDAVTELAEMKRRLKEMEEEAAALREMQAKVEKEMGATQ. A necessary for homooligomerization region spans residues 75-216; sequence SMAANQEGKE…FRRPMRYMPY (142 aa). One can recognise an RRM domain in the interval 89–165; it reads RSVYVGNVDY…RQLKVSPKRT (77 aa). The Nuclear localization signal motif lies at 162 to 169; the sequence is PKRTNVPG.

Monomer and homooligomer. Binds RNA as a monomer and oligomerizes when bound to poly(A). Forms a complex with cleavage and polyadenylation specificity factor (CPSF) subunits PAPS4, PABN1, PABN2, CSTF50 and FIPS5. Interacts with CSP3.

The protein localises to the nucleus speckle. The protein resides in the cytoplasm. Involved in the 3'-end formation of mRNA precursors (pre-mRNA) by the addition of a poly(A) tail of 200-250 nt to the upstream cleavage product. Stimulates poly(A) polymerase (PAPOLA) conferring processivity on the poly(A) tail elongation reaction and also controls the poly(A) tail length. Increases the affinity of poly(A) polymerase for RNA. Binds to poly(A) and to poly(G) with high affinity. May protect the poly(A) tail from degradation. This chain is Polyadenylate-binding protein 3, found in Arabidopsis thaliana (Mouse-ear cress).